The chain runs to 141 residues: Large ribosomal subunit protein uL11c (141 aa).

The protein belongs to the universal ribosomal protein uL11 family. In terms of assembly, part of the ribosomal stalk of the 50S ribosomal subunit. Interacts with L10 and the large rRNA to form the base of the stalk. L10 forms an elongated spine to which L12 dimers bind in a sequential fashion forming a multimeric L10(L12)X complex.

The protein localises to the plastid. Its subcellular location is the chloroplast. Forms part of the ribosomal stalk which helps the ribosome interact with GTP-bound translation factors. The sequence is that of Large ribosomal subunit protein uL11c from Cyanidium caldarium (Red alga).